The following is a 61-amino-acid chain: Calprismin (61 aa).

Glycosylated. In terms of tissue distribution, expressed by the calcifying mantle epithelium and incorporated into the shell's calcitic prismatic layer.

This is Calprismin from Pinna nobilis (Noble pen shell).